A 210-amino-acid chain; its full sequence is MMKMEVVFVFLMLLGTINCQKLILTGRPFLHHQGIINQVSTVTKVIHHELEVAASADDIWTVYSWPGLAKHLPDLLPGAFEKLEIIGDGGVGTILDMTFVPGEFPHEYKEKFILVDNEHRLKKVQMIEGGYLDLGVTYYMDTIHVVPTGKDSCVIKSSTEYHVKPEFVKIVEPLITTGPLAAMADAISKLVLEHKSKSNSDEIEAAIITV.

A signal peptide spans 1 to 19 (MMKMEVVFVFLMLLGTINC). Residue 108 to 110 (YKE) coordinates dopamine. The active-site Proton donor is the K122. D141 serves as a coordination point for (4-hydroxyphenyl)acetaldehyde.

The protein belongs to the BetVI family. As to quaternary structure, concentration-dependent dimerization, but mainly monomeric at concentrations around 10 uM. As to expression, expressed most abundantly in the rhizomes and to a lesser extent in petioles, roots, leaves and flower buds.

It carries out the reaction (4-hydroxyphenyl)acetaldehyde + dopamine = (S)-norcoclaurine + H2O. Functionally, involved in the biosynthesis of the common precursor of all benzylisoquinoline alkaloids such as morphine, sanguinarine, codeine or berberine. Condenses dopamine and 4-hydroxyphenylacetaldehyde. In Thalictrum flavum subsp. glaucum (Yellow meadow rue), this protein is S-norcoclaurine synthase.